The following is a 220-amino-acid chain: Large ribosomal subunit protein bL9 (220 aa).

A compositionally biased stretch (low complexity) spans Ala-167–Asp-184. The disordered stretch occupies residues Ala-167–Thr-220. A compositionally biased stretch (acidic residues) spans Ala-211–Thr-220.

It belongs to the bacterial ribosomal protein bL9 family.

Functionally, binds to the 23S rRNA. In Anaplasma marginale (strain Florida), this protein is Large ribosomal subunit protein bL9.